The primary structure comprises 631 residues: Sperm-associated antigen 16 protein (631 aa).

The stretch at aspartate 152–arginine 267 forms a coiled coil. The disordered stretch occupies residues glutamine 266–lysine 332. Basic and acidic residues-rich tracts occupy residues lysine 277–alanine 287 and glycine 295–lysine 304. 7 WD repeats span residues leucine 350 to threonine 389, glycine 392 to threonine 431, glycine 434 to threonine 473, glycine 476 to serine 515, glycine 518 to serine 557, isoleucine 560 to methionine 600, and glycine 601 to tryptophan 630.

In terms of assembly, interacts with SPAG6 and STK36. Post-translationally, phosphorylated by TSSK2. As to expression, isoform 1 is detected in testis. Isoform 4 is detected in testis and brain, and at lower levels in kidney, heart, pancreas, thyroid, ovary, adrenal gland, spinal cord, trachea and liver.

The protein resides in the cytoplasm. The protein localises to the cytoskeleton. Its subcellular location is the flagellum axoneme. It localises to the cilium axoneme. It is found in the cell projection. The protein resides in the cilium. The protein localises to the flagellum. Necessary for sperm flagellar function. Plays a role in motile ciliogenesis. May help to recruit STK36 to the cilium or apical surface of the cell to initiate subsequent steps of construction of the central pair apparatus of motile cilia. This chain is Sperm-associated antigen 16 protein (SPAG16), found in Homo sapiens (Human).